We begin with the raw amino-acid sequence, 258 residues long: MAASILNVLLRRLPGVSPFRGAYGVQVLLQTLCTKAPPEDDSLPQVPISPYKDEPWKYLDSEEYQNRYGSRPVWADYRRNHKGGIPPQRTRKMCIRGNKVAGNPCPICRDQKLHVDFRNVKLLEQFVCAHTGIIFHAPYTGVCMKQHKKLTQAIQKARDHGLLRYHIPQVEPRDLDFSTTHGAVSSTPPAPTLVSGDPWYPWYSWKQPPERELSRLRRLYQGRLREESGPPPELMPEVPLTAPAEASSTEPGAPQSAL.

The N-terminal 35 residues, 1–35 (MAASILNVLLRRLPGVSPFRGAYGVQVLLQTLCTK), are a transit peptide targeting the mitochondrion. Residue Ser49 is modified to Phosphoserine. Positions 223–258 (RLREESGPPPELMPEVPLTAPAEASSTEPGAPQSAL) are disordered.

This sequence belongs to the bacterial ribosomal protein bS18 family. Mitochondrion-specific ribosomal protein mS40 subfamily. In terms of assembly, component of the mitochondrial ribosome small subunit (28S) which comprises a 12S rRNA and about 30 distinct proteins.

The protein resides in the mitochondrion. The polypeptide is Small ribosomal subunit protein mS40 (MRPS18B) (Sus scrofa (Pig)).